The sequence spans 360 residues: Peptide chain release factor 1 (360 aa).

Gln-235 is subject to N5-methylglutamine.

This sequence belongs to the prokaryotic/mitochondrial release factor family. Post-translationally, methylated by PrmC. Methylation increases the termination efficiency of RF1.

The protein localises to the cytoplasm. Its function is as follows. Peptide chain release factor 1 directs the termination of translation in response to the peptide chain termination codons UAG and UAA. The polypeptide is Peptide chain release factor 1 (Delftia acidovorans (strain DSM 14801 / SPH-1)).